Here is a 136-residue protein sequence, read N- to C-terminus: MGRVRTKTVKRASKALIERYYPKLTLDFQTNKRLCDEIATIQSKRLRNKIAGYTTHLMKRIQKGPVRGISFKLQEEERERKDQYVPEVSALDLSRSNGVLNVDNQTSDLVKSLGLKLPLSVINVSAQRDRRYRKRV.

The protein belongs to the eukaryotic ribosomal protein eS17 family. Component of the small ribosomal subunit (SSU). Mature yeast ribosomes consist of a small (40S) and a large (60S) subunit. The 40S small subunit contains 1 molecule of ribosomal RNA (18S rRNA) and 33 different proteins (encoded by 57 genes). The large 60S subunit contains 3 rRNA molecules (25S, 5.8S and 5S rRNA) and 46 different proteins (encoded by 81 genes).

It localises to the cytoplasm. Functionally, component of the ribosome, a large ribonucleoprotein complex responsible for the synthesis of proteins in the cell. The small ribosomal subunit (SSU) binds messenger RNAs (mRNAs) and translates the encoded message by selecting cognate aminoacyl-transfer RNA (tRNA) molecules. The large subunit (LSU) contains the ribosomal catalytic site termed the peptidyl transferase center (PTC), which catalyzes the formation of peptide bonds, thereby polymerizing the amino acids delivered by tRNAs into a polypeptide chain. The nascent polypeptides leave the ribosome through a tunnel in the LSU and interact with protein factors that function in enzymatic processing, targeting, and the membrane insertion of nascent chains at the exit of the ribosomal tunnel. In Saccharomyces cerevisiae (strain ATCC 204508 / S288c) (Baker's yeast), this protein is Small ribosomal subunit protein eS17A.